The chain runs to 219 residues: 2-hydroxy-3-keto-5-methylthiopentenyl-1-phosphate phosphatase (219 aa).

The protein belongs to the HAD-like hydrolase superfamily. MtnX family.

The enzyme catalyses 2-hydroxy-5-methylsulfanyl-3-oxopent-1-enyl phosphate + H2O = 1,2-dihydroxy-5-(methylsulfanyl)pent-1-en-3-one + phosphate. The protein operates within amino-acid biosynthesis; L-methionine biosynthesis via salvage pathway; L-methionine from S-methyl-5-thio-alpha-D-ribose 1-phosphate: step 4/6. Dephosphorylates 2-hydroxy-3-keto-5-methylthiopentenyl-1-phosphate (HK-MTPenyl-1-P) yielding 1,2-dihydroxy-3-keto-5-methylthiopentene (DHK-MTPene). This chain is 2-hydroxy-3-keto-5-methylthiopentenyl-1-phosphate phosphatase, found in Bacillus cereus (strain 03BB102).